Reading from the N-terminus, the 285-residue chain is Octanoyltransferase (285 aa).

Residues 50 to 277 (LRTPDELWIV…NIAQRHAGDI (228 aa)) form the BPL/LPL catalytic domain. Substrate contacts are provided by residues 89–96 (RGGQVTWH), 189–191 (SLG), and 202–204 (GIA). Catalysis depends on cysteine 220, which acts as the Acyl-thioester intermediate.

Belongs to the LipB family.

Its subcellular location is the cytoplasm. The enzyme catalyses octanoyl-[ACP] + L-lysyl-[protein] = N(6)-octanoyl-L-lysyl-[protein] + holo-[ACP] + H(+). It functions in the pathway protein modification; protein lipoylation via endogenous pathway; protein N(6)-(lipoyl)lysine from octanoyl-[acyl-carrier-protein]: step 1/2. In terms of biological role, catalyzes the transfer of endogenously produced octanoic acid from octanoyl-acyl-carrier-protein onto the lipoyl domains of lipoate-dependent enzymes. Lipoyl-ACP can also act as a substrate although octanoyl-ACP is likely to be the physiological substrate. This chain is Octanoyltransferase, found in Psychrobacter cryohalolentis (strain ATCC BAA-1226 / DSM 17306 / VKM B-2378 / K5).